The following is a 222-amino-acid chain: MFTKQVTNSKVYQWFEERLEIQALADDVSSKYVPPHVNIFYCLGGITLTCFLIQFATGFAMTFYYKPTVTEAFASVQYIMNDVNFGWLIRSIHKWSASMMVLMMILHVFRVYLTGGFKKPRELTWVTGVVLAVITVSFGVTGYSLPWDQVGYWAVKIVSGVPSAIPVVGDTIVELMRGGVSVGQGTLTRYYSLHTFVLPWLIAVFMLLHFLMIRKQGISGPL.

The helical transmembrane segment at 39–59 (IFYCLGGITLTCFLIQFATGF) threads the bilayer. Residue Cys42 coordinates heme c. Positions 93 and 107 each coordinate heme b. Transmembrane regions (helical) follow at residues 97-117 (ASMM…TGGF), 123-143 (LTWV…VTGY), and 193-213 (LHTF…FLMI). Heme b-binding residues include His194 and His209.

This sequence belongs to the cytochrome b family. PetB subfamily. As to quaternary structure, the 4 large subunits of the cytochrome b6-f complex are cytochrome b6, subunit IV (17 kDa polypeptide, PetD), cytochrome f and the Rieske protein, while the 4 small subunits are PetG, PetL, PetM and PetN. The complex functions as a dimer. Requires heme b as cofactor. The cofactor is heme c.

It localises to the cellular thylakoid membrane. Functionally, component of the cytochrome b6-f complex, which mediates electron transfer between photosystem II (PSII) and photosystem I (PSI), cyclic electron flow around PSI, and state transitions. In Cyanothece sp. (strain PCC 7425 / ATCC 29141), this protein is Cytochrome b6.